The primary structure comprises 394 residues: Peroxisomal membrane protein PEX25 (394 aa).

Positions 1–25 (MSQFGTTDIVSGSETPPYSGASYQD) are enriched in polar residues. The interval 1-65 (MSQFGTTDIV…SRSDDEDSQA (65 aa)) is disordered. Topologically, residues 1–366 (MSQFGTTDIV…LNLKTPKGTY (366 aa)) are cytoplasmic. The span at 51 to 65 (SHTESSRSDDEDSQA) shows a compositional bias: basic and acidic residues. Phosphoserine occurs at positions 58, 63, and 289. Residues 367 to 383 (AVLSLGSGLTGLVKLWI) traverse the membrane as a helical segment. Residues 384–394 (TTKRSLCSSKD) lie on the Lumenal side of the membrane.

Homooligomer. Interacts with PEX27 and PEX34.

It localises to the peroxisome membrane. Required for regulation of peroxisome size and maintenance. Has a role in the import of peroxisomal matrix proteins. Imports RHO1 into the peroxisome. Also promotes peroxisome division and biogenesis. The chain is Peroxisomal membrane protein PEX25 (PEX25) from Saccharomyces cerevisiae (strain ATCC 204508 / S288c) (Baker's yeast).